The sequence spans 305 residues: Ribonuclease BN (305 aa).

Zn(2+) is bound by residues H64, H66, D68, H69, H141, D212, and H270. D68 serves as the catalytic Proton acceptor.

This sequence belongs to the RNase Z family. RNase BN subfamily. As to quaternary structure, homodimer. Requires Zn(2+) as cofactor.

Functionally, zinc phosphodiesterase, which has both exoribonuclease and endoribonuclease activities. This is Ribonuclease BN from Enterobacter sp. (strain 638).